A 451-amino-acid polypeptide reads, in one-letter code: Probable glycine dehydrogenase (decarboxylating) subunit 1 (451 aa).

The protein belongs to the GcvP family. N-terminal subunit subfamily. In terms of assembly, the glycine cleavage system is composed of four proteins: P, T, L and H. In this organism, the P 'protein' is a heterodimer of two subunits.

It carries out the reaction N(6)-[(R)-lipoyl]-L-lysyl-[glycine-cleavage complex H protein] + glycine + H(+) = N(6)-[(R)-S(8)-aminomethyldihydrolipoyl]-L-lysyl-[glycine-cleavage complex H protein] + CO2. Its function is as follows. The glycine cleavage system catalyzes the degradation of glycine. The P protein binds the alpha-amino group of glycine through its pyridoxal phosphate cofactor; CO(2) is released and the remaining methylamine moiety is then transferred to the lipoamide cofactor of the H protein. The chain is Probable glycine dehydrogenase (decarboxylating) subunit 1 from Staphylococcus aureus (strain MSSA476).